A 1038-amino-acid chain; its full sequence is Isoleucine--tRNA ligase (1038 aa).

Residues proline 47–histidine 57 carry the 'HIGH' region motif. The short motif at lysine 591–arginine 595 is the 'KMSKS' region element. An ATP-binding site is contributed by lysine 594.

This sequence belongs to the class-I aminoacyl-tRNA synthetase family. IleS type 2 subfamily. Monomer. Requires Zn(2+) as cofactor.

It localises to the cytoplasm. It carries out the reaction tRNA(Ile) + L-isoleucine + ATP = L-isoleucyl-tRNA(Ile) + AMP + diphosphate. In terms of biological role, catalyzes the attachment of isoleucine to tRNA(Ile). As IleRS can inadvertently accommodate and process structurally similar amino acids such as valine, to avoid such errors it has two additional distinct tRNA(Ile)-dependent editing activities. One activity is designated as 'pretransfer' editing and involves the hydrolysis of activated Val-AMP. The other activity is designated 'posttransfer' editing and involves deacylation of mischarged Val-tRNA(Ile). This is Isoleucine--tRNA ligase from Protochlamydia amoebophila (strain UWE25).